Reading from the N-terminus, the 171-residue chain is Adenine phosphoribosyltransferase (171 aa).

This sequence belongs to the purine/pyrimidine phosphoribosyltransferase family. In terms of assembly, homodimer.

It is found in the cytoplasm. It carries out the reaction AMP + diphosphate = 5-phospho-alpha-D-ribose 1-diphosphate + adenine. The protein operates within purine metabolism; AMP biosynthesis via salvage pathway; AMP from adenine: step 1/1. Its function is as follows. Catalyzes a salvage reaction resulting in the formation of AMP, that is energically less costly than de novo synthesis. This is Adenine phosphoribosyltransferase from Trichlorobacter lovleyi (strain ATCC BAA-1151 / DSM 17278 / SZ) (Geobacter lovleyi).